Reading from the N-terminus, the 535-residue chain is GMP synthase [glutamine-hydrolyzing] (535 aa).

A Glutamine amidotransferase type-1 domain is found at 4 to 210 (KILILDFGSQ…VHEICHCKPD (207 aa)). Cys-85 acts as the Nucleophile in catalysis. Catalysis depends on residues His-184 and Glu-186. The GMPS ATP-PPase domain maps to 211 to 403 (WVMGDYIAEA…LGLPREMVYR (193 aa)). 238-244 (SGGVDSS) serves as a coordination point for ATP.

As to quaternary structure, homodimer.

It carries out the reaction XMP + L-glutamine + ATP + H2O = GMP + L-glutamate + AMP + diphosphate + 2 H(+). It participates in purine metabolism; GMP biosynthesis; GMP from XMP (L-Gln route): step 1/1. In terms of biological role, catalyzes the synthesis of GMP from XMP. The polypeptide is GMP synthase [glutamine-hydrolyzing] (Polynucleobacter asymbioticus (strain DSM 18221 / CIP 109841 / QLW-P1DMWA-1) (Polynucleobacter necessarius subsp. asymbioticus)).